We begin with the raw amino-acid sequence, 505 residues long: Glutamyl-tRNA(Gln) amidotransferase subunit B, mitochondrial (505 aa).

Belongs to the GatB/GatE family. GatB subfamily. Subunit of the heterotrimeric GatCAB amidotransferase (AdT) complex, composed of A, B and C subunits.

It is found in the mitochondrion. It catalyses the reaction L-glutamyl-tRNA(Gln) + L-glutamine + ATP + H2O = L-glutaminyl-tRNA(Gln) + L-glutamate + ADP + phosphate + H(+). Functionally, allows the formation of correctly charged Gln-tRNA(Gln) through the transamidation of misacylated Glu-tRNA(Gln) in the mitochondria. The reaction takes place in the presence of glutamine and ATP through an activated gamma-phospho-Glu-tRNA(Gln). In Schizosaccharomyces japonicus (strain yFS275 / FY16936) (Fission yeast), this protein is Glutamyl-tRNA(Gln) amidotransferase subunit B, mitochondrial.